We begin with the raw amino-acid sequence, 185 residues long: Large ribosomal subunit protein uL5 (185 aa).

Belongs to the universal ribosomal protein uL5 family. In terms of assembly, part of the 50S ribosomal subunit; part of the 5S rRNA/L5/L18/L25 subcomplex. Contacts the 5S rRNA and the P site tRNA. Forms a bridge to the 30S subunit in the 70S ribosome.

Its function is as follows. This is one of the proteins that bind and probably mediate the attachment of the 5S RNA into the large ribosomal subunit, where it forms part of the central protuberance. In the 70S ribosome it contacts protein S13 of the 30S subunit (bridge B1b), connecting the 2 subunits; this bridge is implicated in subunit movement. Contacts the P site tRNA; the 5S rRNA and some of its associated proteins might help stabilize positioning of ribosome-bound tRNAs. This is Large ribosomal subunit protein uL5 from Chelativorans sp. (strain BNC1).